Reading from the N-terminus, the 150-residue chain is UPF0178 protein PputGB1_5282 (150 aa).

Belongs to the UPF0178 family.

This chain is UPF0178 protein PputGB1_5282, found in Pseudomonas putida (strain GB-1).